Here is a 301-residue protein sequence, read N- to C-terminus: Protein translocase subunit SecF (301 aa).

Transmembrane regions (helical) follow at residues 17–37 (YIALALSCIMIILGIFAIFQI), 137–157 (DALFAILAATAGILIYIAIRF), 163–183 (IGATVATFHDVMAVLGIFYIL), 190–210 (IFISALLTIAGYSLTDTVVVF), 239–261 (LSRTIVTSLTTLMAAVALFFFGG), and 272–292 (ILGILVGTYSSIFVASPVVLL).

Belongs to the SecD/SecF family. SecF subfamily. As to quaternary structure, forms a complex with SecD. Part of the essential Sec protein translocation apparatus which comprises SecA, SecYEG and auxiliary proteins SecDF. Other proteins may also be involved.

Its subcellular location is the cell inner membrane. Its function is as follows. Part of the Sec protein translocase complex. Interacts with the SecYEG preprotein conducting channel. SecDF uses the proton motive force (PMF) to complete protein translocation after the ATP-dependent function of SecA. The sequence is that of Protein translocase subunit SecF from Thermodesulfovibrio yellowstonii (strain ATCC 51303 / DSM 11347 / YP87).